We begin with the raw amino-acid sequence, 902 residues long: Chitin synthase 3 (902 aa).

The segment covering 1–15 (MAYNRLDDDYFDNRR) has biased composition (basic and acidic residues). Residues 1–68 (MAYNRLDDDY…MGPGRHTPSD (68 aa)) form a disordered region. Pro residues predominate over residues 19 to 30 (NRPPPHRTPSPG). Asn80 is a glycosylation site (N-linked (GlcNAc...) asparagine). Residues 104-161 (HHDAYYNPTYTPTPNEAQTPYGEPGYEHDGRPLLPQQDSYGQYSDNPQQQQQQQGGLK) are disordered. 2 stretches are compositionally biased toward polar residues: residues 111–121 (PTYTPTPNEAQ) and 139–150 (QQDSYGQYSDNP). Transmembrane regions (helical) follow at residues 449–469 (SAFG…YIAL), 547–567 (RWLN…YQFF), 577–597 (IAFF…WFAI), 623–643 (ILGV…FVLA), 656–676 (LAMI…AVFI), 699–719 (VVVT…VASL), 731–751 (LVQY…YAFC), 830–850 (VVVL…LSTA), and 874–894 (VVLY…MWFL).

Belongs to the chitin synthase family. Class II subfamily.

Its subcellular location is the cell membrane. It catalyses the reaction [(1-&gt;4)-N-acetyl-beta-D-glucosaminyl](n) + UDP-N-acetyl-alpha-D-glucosamine = [(1-&gt;4)-N-acetyl-beta-D-glucosaminyl](n+1) + UDP + H(+). Its function is as follows. Polymerizes chitin, a structural polymer of the cell wall and septum, by transferring the sugar moiety of UDP-GlcNAc to the non-reducing end of the growing chitin polymer. CHS1 and CHS3 have compensatory functions in cell wall modifications in responses to stresses. Might function as a negative regulator on expression of other CHS genes. The protein is Chitin synthase 3 of Pyricularia oryzae (strain 70-15 / ATCC MYA-4617 / FGSC 8958) (Rice blast fungus).